A 345-amino-acid chain; its full sequence is Adenine deaminase (345 aa).

Zn(2+) is bound by residues histidine 20, histidine 22, and histidine 204. Glutamate 207 functions as the Proton donor in the catalytic mechanism. A Zn(2+)-binding site is contributed by aspartate 285. Aspartate 286 contacts substrate.

The protein belongs to the metallo-dependent hydrolases superfamily. Adenosine and AMP deaminases family. Adenine deaminase type 2 subfamily. Zn(2+) is required as a cofactor.

It carries out the reaction adenine + H2O + H(+) = hypoxanthine + NH4(+). Catalyzes the hydrolytic deamination of adenine to hypoxanthine. Plays an important role in the purine salvage pathway and in nitrogen catabolism. The chain is Adenine deaminase from Ralstonia pickettii (strain 12J).